The following is a 95-amino-acid chain: Large ribosomal subunit protein bL27 (95 aa).

A disordered region spans residues 1–24; it reads MAHKKGTGSTRNGRDSNSQRLGVK. A compositionally biased stretch (polar residues) spans 7 to 20; it reads TGSTRNGRDSNSQR.

Belongs to the bacterial ribosomal protein bL27 family.

The protein is Large ribosomal subunit protein bL27 of Trichodesmium erythraeum (strain IMS101).